The primary structure comprises 121 residues: Large ribosomal subunit protein uL18 (121 aa).

This sequence belongs to the universal ribosomal protein uL18 family. Part of the 50S ribosomal subunit; part of the 5S rRNA/L5/L18/L25 subcomplex. Contacts the 5S and 23S rRNAs.

This is one of the proteins that bind and probably mediate the attachment of the 5S RNA into the large ribosomal subunit, where it forms part of the central protuberance. The protein is Large ribosomal subunit protein uL18 of Polaromonas sp. (strain JS666 / ATCC BAA-500).